Here is a 246-residue protein sequence, read N- to C-terminus: DNA polymerase sliding clamp (246 aa).

It belongs to the PCNA family. As to quaternary structure, homotrimer. The subunits circularize to form a toroid; DNA passes through its center. Replication factor C (RFC) is required to load the toroid on the DNA.

Its function is as follows. Sliding clamp subunit that acts as a moving platform for DNA processing. Responsible for tethering the catalytic subunit of DNA polymerase and other proteins to DNA during high-speed replication. The sequence is that of DNA polymerase sliding clamp from Thermoplasma acidophilum (strain ATCC 25905 / DSM 1728 / JCM 9062 / NBRC 15155 / AMRC-C165).